The sequence spans 748 residues: Catalase-peroxidase (748 aa).

The segment at residues 91–236 is a cross-link (tryptophyl-tyrosyl-methioninium (Trp-Tyr) (with M-262)); the sequence is WHSAGTYRVG…LAAVQMGLIY (146 aa). Residue H92 is the Proton acceptor of the active site. Positions 201 to 223 are disordered; sequence AQPVADKAGHGKEHGRTDGGRNL. The segment covering 207–221 has biased composition (basic and acidic residues); the sequence is KAGHGKEHGRTDGGR. The tryptophyl-tyrosyl-methioninium (Tyr-Met) (with W-91) cross-link spans 236–262; it reads YVNPEGPDGNPDPQASAHDIRETFARM. H277 contributes to the heme b binding site.

The protein belongs to the peroxidase family. Peroxidase/catalase subfamily. In terms of assembly, homodimer or homotetramer. Heme b is required as a cofactor. Formation of the three residue Trp-Tyr-Met cross-link is important for the catalase, but not the peroxidase activity of the enzyme.

It catalyses the reaction H2O2 + AH2 = A + 2 H2O. The catalysed reaction is 2 H2O2 = O2 + 2 H2O. Functionally, bifunctional enzyme with both catalase and broad-spectrum peroxidase activity. The polypeptide is Catalase-peroxidase (Bordetella avium (strain 197N)).